Here is a 167-residue protein sequence, read N- to C-terminus: Photosystem I assembly protein Ycf3 (167 aa).

3 TPR repeats span residues 35 to 68, 72 to 105, and 120 to 153; these read AFTY…EVDA, SYIF…NPSL, and GEQA…APTN.

It belongs to the Ycf3 family.

It is found in the plastid. Its subcellular location is the chloroplast thylakoid membrane. Essential for the assembly of the photosystem I (PSI) complex. May act as a chaperone-like factor to guide the assembly of the PSI subunits. This Pleurastrum terricola (Filamentous green alga) protein is Photosystem I assembly protein Ycf3.